The following is a 310-amino-acid chain: Transcription factor MYB53 (310 aa).

HTH myb-type domains are found at residues 9 to 61 (ETGL…TNYL) and 62 to 116 (RPDI…KKKL). 2 DNA-binding regions (H-T-H motif) span residues 37 to 61 (WSAL…TNYL) and 89 to 112 (WSMI…NTHL).

As to quaternary structure, interacts with FBX5. As to expression, highly expressed in roots and at lower levels in leaves, stems and flowers.

Its subcellular location is the nucleus. Probable transcription factor. The protein is Transcription factor MYB53 of Arabidopsis thaliana (Mouse-ear cress).